Reading from the N-terminus, the 356-residue chain is 4-hydroxy-3-methylbut-2-en-1-yl diphosphate synthase (flavodoxin) (356 aa).

[4Fe-4S] cluster contacts are provided by C264, C267, C299, and E306.

The protein belongs to the IspG family. [4Fe-4S] cluster is required as a cofactor.

It catalyses the reaction (2E)-4-hydroxy-3-methylbut-2-enyl diphosphate + oxidized [flavodoxin] + H2O + 2 H(+) = 2-C-methyl-D-erythritol 2,4-cyclic diphosphate + reduced [flavodoxin]. It participates in isoprenoid biosynthesis; isopentenyl diphosphate biosynthesis via DXP pathway; isopentenyl diphosphate from 1-deoxy-D-xylulose 5-phosphate: step 5/6. In terms of biological role, converts 2C-methyl-D-erythritol 2,4-cyclodiphosphate (ME-2,4cPP) into 1-hydroxy-2-methyl-2-(E)-butenyl 4-diphosphate. The chain is 4-hydroxy-3-methylbut-2-en-1-yl diphosphate synthase (flavodoxin) from Natranaerobius thermophilus (strain ATCC BAA-1301 / DSM 18059 / JW/NM-WN-LF).